A 411-amino-acid chain; its full sequence is Ubiquitin-binding protein CUE5 (411 aa).

Residues methionine 1–leucine 12 show a composition bias toward basic and acidic residues. Disordered regions lie at residues methionine 1–leucine 102 and glutamate 142–methionine 411. Residue lysine 15 forms a Glycyl lysine isopeptide (Lys-Gly) (interchain with G-Cter in ubiquitin) linkage. Residues serine 21 and serine 36 each carry the phosphoserine modification. Positions aspartate 25 to asparagine 58 are enriched in basic and acidic residues. Residue lysine 59 forms a Glycyl lysine isopeptide (Lys-Gly) (interchain with G-Cter in ubiquitin) linkage. Phosphothreonine is present on threonine 70. A Glycyl lysine isopeptide (Lys-Gly) (interchain with G-Cter in ubiquitin) cross-link involves residue lysine 76. A Phosphoserine modification is found at serine 91. The 44-residue stretch at lysine 97–aspartate 140 folds into the CUE domain. Residue lysine 156 forms a Glycyl lysine isopeptide (Lys-Gly) (interchain with G-Cter in ubiquitin) linkage. Threonine 167 carries the phosphothreonine modification. Positions asparagine 209–aspartate 219 are enriched in basic and acidic residues. Serine 220 carries the post-translational modification Phosphoserine. Residues valine 230 to glycine 242 show a composition bias toward basic and acidic residues. A compositionally biased stretch (polar residues) spans leucine 245–isoleucine 256. Phosphoserine is present on residues serine 309 and serine 318. Threonine 346 is subject to Phosphothreonine. The residue at position 348 (serine 348) is a Phosphoserine. Position 352 is a phosphothreonine (threonine 352). Lysine 354 participates in a covalent cross-link: Glycyl lysine isopeptide (Lys-Gly) (interchain with G-Cter in ubiquitin). A phosphothreonine mark is found at threonine 364 and threonine 367. The AIM motif lies at tryptophan 373–leucine 376. A Glycyl lysine isopeptide (Lys-Gly) (interchain with G-Cter in ubiquitin) cross-link involves residue lysine 396. Residues aspartate 399–methionine 411 show a composition bias toward acidic residues. Phosphoserine is present on serine 407.

Interacts with ATG8 (via AIM motif), CLB2, and ubiquitin (via CUE domain).

The protein resides in the cytoplasm. Its function is as follows. Connects the ubiquitin pathway to autophagy by functioning as a ubiquitin-ATG8 adapter and thus mediating autophagic clearance of ubiquitin conjugates under starvation conditions. The CUE5-dependent selective autophagy pathway plays an important role in clearance of cytotoxic protein aggregates. Not required for cytoplasmic to vacuole pathway (cvt), mitophagy, pexophagy, or ribophagy. This chain is Ubiquitin-binding protein CUE5, found in Saccharomyces cerevisiae (strain ATCC 204508 / S288c) (Baker's yeast).